The chain runs to 83 residues: Sulfur carrier protein TusA (83 aa).

Catalysis depends on cysteine 20, which acts as the Cysteine persulfide intermediate.

This sequence belongs to the sulfur carrier protein TusA family.

It localises to the cytoplasm. In terms of biological role, sulfur carrier protein which probably makes part of a sulfur-relay system. The polypeptide is Sulfur carrier protein TusA (Pseudoalteromonas atlantica (strain T6c / ATCC BAA-1087)).